Reading from the N-terminus, the 619-residue chain is MAVSKKSRKSEPSAAFTAADGLVLDQSEIMRAMLAAQKGKQKEESEGNDESDEEDDDVSNEGEDEGESSGSEAESSVAAQRNLKRRRSLSFELDAEGEEDKENEESEPRPQPSSGAGMLSRTALATKDMTPKPRSKPQPNGLPSASKPSADVTFESLGLSRPLITALASINIKKPTEIQAACVEPILSGRDCIGGAKTGSGKTMAFALPIVERIARDPFGVWAVVLTPTRELAYQLSEQFLVIGKPLGLTTATIVGGMDMMKQAQELEARPHIIVATPGRLCDLLRSGGVGPGKLSRVRTLVLDEADRMLTPSFAPELAYLFSQIPAKRQTCLFTATVSEAIMELANKEPPAGKQRPFVYRVASDTLTVSNLKQKYLFIPSQIRDPYLLYILQNPLEDIDVALRVDPKKAKAREREAALGKKGKKPKQAKEEEDAPSVPSTVIFTQRCATAHLLHLLLNSLDIPSVPLHSHLTQPQRLLSLARFRAHEVPVLVTTDVGSRGLDIPEVAMVINWDCPRRSDDYVHRVGRTARAGRGGVAVTIITERDTELVKIIEDEVNVRLEELKLDEDKVLEGLNKVSLARRMATMEMHDSGFGERQATNKAKQIKRMKRDAAAAGKA.

The disordered stretch occupies residues 1-149 (MAVSKKSRKS…NGLPSASKPS (149 aa)). Positions 46 to 67 (EGNDESDEEDDDVSNEGEDEGE) are enriched in acidic residues. Positions 68–78 (SSGSEAESSVA) are enriched in low complexity. Residues 93-105 (LDAEGEEDKENEE) show a composition bias toward acidic residues. The span at 137-147 (PQPNGLPSASK) shows a compositional bias: polar residues. Residues 152-180 (VTFESLGLSRPLITALASINIKKPTEIQA) carry the Q motif motif. Residues 183–356 (VEPILSGRDC…NKEPPAGKQR (174 aa)) enclose the Helicase ATP-binding domain. Position 196–203 (196–203 (AKTGSGKT)) interacts with ATP. The DEAD box signature appears at 304-307 (DEAD). A disordered region spans residues 414-436 (EREAALGKKGKKPKQAKEEEDAP). The region spanning 430–572 (KEEEDAPSVP…ELKLDEDKVL (143 aa)) is the Helicase C-terminal domain.

The protein belongs to the DEAD box helicase family. DDX49/DBP8 subfamily.

The protein localises to the nucleus. Its subcellular location is the nucleolus. It catalyses the reaction ATP + H2O = ADP + phosphate + H(+). Functionally, ATP-binding RNA helicase involved in 40S ribosomal subunit biogenesis and is required for the normal formation of 18S rRNAs through pre-rRNA processing at A0, A1 and A2 sites. Required for vegetative growth. In Cryptococcus neoformans var. neoformans serotype D (strain B-3501A) (Filobasidiella neoformans), this protein is ATP-dependent RNA helicase DBP8 (DBP8).